Consider the following 288-residue polypeptide: Polyamine aminopropyltransferase (288 aa).

The region spanning 9–238 (ETLHDQFGQY…GIMTFAWATD (230 aa)) is the PABS domain. Q33 is a binding site for S-methyl-5'-thioadenosine. Positions 64 and 88 each coordinate spermidine. S-methyl-5'-thioadenosine is bound by residues E108 and 140 to 141 (DG). The active-site Proton acceptor is the D158. Residue 158-161 (DCTD) coordinates spermidine. P165 provides a ligand contact to S-methyl-5'-thioadenosine.

This sequence belongs to the spermidine/spermine synthase family. Homodimer or homotetramer.

Its subcellular location is the cytoplasm. The catalysed reaction is S-adenosyl 3-(methylsulfanyl)propylamine + putrescine = S-methyl-5'-thioadenosine + spermidine + H(+). It functions in the pathway amine and polyamine biosynthesis; spermidine biosynthesis; spermidine from putrescine: step 1/1. In terms of biological role, catalyzes the irreversible transfer of a propylamine group from the amino donor S-adenosylmethioninamine (decarboxy-AdoMet) to putrescine (1,4-diaminobutane) to yield spermidine. The chain is Polyamine aminopropyltransferase from Escherichia fergusonii (strain ATCC 35469 / DSM 13698 / CCUG 18766 / IAM 14443 / JCM 21226 / LMG 7866 / NBRC 102419 / NCTC 12128 / CDC 0568-73).